We begin with the raw amino-acid sequence, 123 residues long: Small ribosomal subunit protein uS12 (123 aa).

D89 carries the post-translational modification 3-methylthioaspartic acid.

Belongs to the universal ribosomal protein uS12 family. In terms of assembly, part of the 30S ribosomal subunit. Contacts proteins S8 and S17. May interact with IF1 in the 30S initiation complex.

With S4 and S5 plays an important role in translational accuracy. Its function is as follows. Interacts with and stabilizes bases of the 16S rRNA that are involved in tRNA selection in the A site and with the mRNA backbone. Located at the interface of the 30S and 50S subunits, it traverses the body of the 30S subunit contacting proteins on the other side and probably holding the rRNA structure together. The combined cluster of proteins S8, S12 and S17 appears to hold together the shoulder and platform of the 30S subunit. In Rhodopseudomonas palustris (strain BisB18), this protein is Small ribosomal subunit protein uS12.